A 362-amino-acid polypeptide reads, in one-letter code: Heme A synthase (362 aa).

5 consecutive transmembrane segments (helical) span residues 11 to 31 (AAIRIWLSIVAGLIALMVLVG), 102 to 122 (VIGMVYLLPFLWFLWRGAVSG), 128 to 148 (LWLIFGLGALQGAVGWWMVAS), 159 to 179 (VRLATHLSLALLIFASIVWTL), and 198 to 218 (AWALVGVTFVQLYLGALVAGL). Histidine 262 is a heme binding site. 3 helical membrane passes run 264 to 286 (MTAYTLLALAAWHAFDVMRAGAG), 297 to 317 (LAAILVQAVLGIATLLMVVPI), and 318 to 338 (SLALLHQGTALIVLTFAVLQA). Histidine 323 serves as a coordination point for heme.

Belongs to the COX15/CtaA family. Type 2 subfamily. In terms of assembly, interacts with CtaB. Requires heme b as cofactor.

The protein resides in the cell membrane. It catalyses the reaction Fe(II)-heme o + 2 A + H2O = Fe(II)-heme a + 2 AH2. It functions in the pathway porphyrin-containing compound metabolism; heme A biosynthesis; heme A from heme O: step 1/1. Catalyzes the conversion of heme O to heme A by two successive hydroxylations of the methyl group at C8. The first hydroxylation forms heme I, the second hydroxylation results in an unstable dihydroxymethyl group, which spontaneously dehydrates, resulting in the formyl group of heme A. This is Heme A synthase from Bradyrhizobium sp. (strain ORS 278).